The sequence spans 445 residues: MAISFDYSNALPFMQENELDYLSEFVKAAHHMLHERKGPGSDFLGWVDWPIRYDKNEFSRIKQAAERIRNHSDALVVIGIGGSYLGARAAIEALSHTFHNQMNDTTQIYFAGQNISSTYISHLLDVLEGKDLSINVISKSGTTTEPAIAFRIFRDYMEKKYGKEEARKRIYVTTDRTKGALKKLADQEGYETFVIPDNIGGRYSVLTAVGLLPIAVAGLNIDRMMEGAASAYHKYNNPDLLTNESYQYAAVRNILYRKGKAIELLVNYEPSLHYVSEWWKQLFGESEGKDQKGLFPASVDFTTDLHSMGQYVQEGRRNLIETVLHVKKPQIELTIQEDPENIDGLNFLAGKTLDEVNKKAFQGTLLAHVDGGVPNLIVELDEMNEYTFGEMVYFFEKACGISGHLLGVNPFDQPGVEAYKKNMFALLGKPGFEDEKAALMKRLSK.

Glu-285 serves as the catalytic Proton donor. Residues His-306 and Lys-420 contribute to the active site.

Belongs to the GPI family. In terms of assembly, homodimer.

It is found in the cytoplasm. The enzyme catalyses alpha-D-glucose 6-phosphate = beta-D-fructose 6-phosphate. It participates in carbohydrate biosynthesis; gluconeogenesis. The protein operates within carbohydrate degradation; glycolysis; D-glyceraldehyde 3-phosphate and glycerone phosphate from D-glucose: step 2/4. Functionally, catalyzes the reversible isomerization of glucose-6-phosphate to fructose-6-phosphate. This chain is Glucose-6-phosphate isomerase 2, found in Geobacillus stearothermophilus (Bacillus stearothermophilus).